Consider the following 1225-residue polypeptide: Mediator of RNA polymerase II transcription subunit 13 (1225 aa).

The protein belongs to the Mediator complex subunit 13 family. As to quaternary structure, component of the srb8-11 complex which consists of rb8, srb9(TRAP240), srb10 and srb11. The srb8-11 complex associates with the Mediator complex thereby blocking association with RNA polymerase II and leading to reduced transcriptional activation by Mediator.

It is found in the nucleus. Component of the srb8-11 complex. The srb8-11 complex is a regulatory module of the Mediator complex which is itself involved in regulation of basal and activated RNA polymerase II-dependent transcription. The srb8-11 complex may be involved in the transcriptional repression of a subset of genes regulated by Mediator. It may inhibit the association of the Mediator complex with RNA polymerase II to form the holoenzyme complex. This chain is Mediator of RNA polymerase II transcription subunit 13 (srb9), found in Schizosaccharomyces pombe (strain 972 / ATCC 24843) (Fission yeast).